A 201-amino-acid polypeptide reads, in one-letter code: Arachin 25 kDa protein (201 aa).

This is one of six apparently different protein chains that constitute the peanut protein arachin.

In Arachis hypogaea (Peanut), this protein is Arachin 25 kDa protein.